We begin with the raw amino-acid sequence, 978 residues long: Chaperone protein ClpB2, chloroplastic (978 aa).

The N-terminal 76 residues, M1 to R76, are a transit peptide targeting the chloroplast. A Clp R domain is found at T85 to K229. Repeat stretches follow at residues F89–Q154 and L166–K229. Residues L244–P492 are i. ATP contacts are provided by residues G289 to T296 and G692 to T699. Positions V618 to S809 are II.

Belongs to the ClpA/ClpB family.

The protein resides in the plastid. It localises to the chloroplast. Molecular chaperone that may play a role in chloroplast development. The sequence is that of Chaperone protein ClpB2, chloroplastic (CLPB2) from Oryza sativa subsp. japonica (Rice).